The sequence spans 570 residues: Urease subunit alpha (570 aa).

A Urease domain is found at 135 to 570 (GGLDIHIHFN…ELPLAKRYSL (436 aa)). Residues His140, His142, and Lys219 each coordinate Ni(2+). An N6-carboxylysine modification is found at Lys219. His221 is a binding site for substrate. Ni(2+) contacts are provided by His248 and His274. His322 acts as the Proton donor in catalysis. Asp362 is a Ni(2+) binding site.

The protein belongs to the metallo-dependent hydrolases superfamily. Urease alpha subunit family. Heterotrimer of UreA (gamma), UreB (beta) and UreC (alpha) subunits. Three heterotrimers associate to form the active enzyme. The cofactor is Ni cation. In terms of processing, carboxylation allows a single lysine to coordinate two nickel ions.

Its subcellular location is the cytoplasm. It catalyses the reaction urea + 2 H2O + H(+) = hydrogencarbonate + 2 NH4(+). It functions in the pathway nitrogen metabolism; urea degradation; CO(2) and NH(3) from urea (urease route): step 1/1. The chain is Urease subunit alpha from Haloquadratum walsbyi (strain DSM 16790 / HBSQ001).